Consider the following 61-residue polypeptide: Sec-independent protein translocase protein TatA (61 aa).

Residues 1–21 form a helical membrane-spanning segment; that stretch reads MFGLGITEILLILGIIILIFG.

The protein belongs to the TatA/E family. The Tat system comprises two distinct complexes: a TatABC complex, containing multiple copies of TatA, TatB and TatC subunits, and a separate TatA complex, containing only TatA subunits. Substrates initially bind to the TatABC complex, which probably triggers association of the separate TatA complex to form the active translocon.

Its subcellular location is the cell inner membrane. Part of the twin-arginine translocation (Tat) system that transports large folded proteins containing a characteristic twin-arginine motif in their signal peptide across membranes. TatA could form the protein-conducting channel of the Tat system. The chain is Sec-independent protein translocase protein TatA from Maridesulfovibrio salexigens (strain ATCC 14822 / DSM 2638 / NCIMB 8403 / VKM B-1763) (Desulfovibrio salexigens).